A 412-amino-acid polypeptide reads, in one-letter code: Small ribosomal subunit protein mL103 (rPPR7) (412 aa).

The transit peptide at methionine 1 to phenylalanine 14 directs the protein to the mitochondrion. Positions glycine 21–lysine 37 are enriched in polar residues. The disordered stretch occupies residues glycine 21–glutamate 43. PPR repeat units follow at residues glutamate 101–arginine 135, serine 136–arginine 166, aspartate 173–valine 207, threonine 208–leucine 242, aspartate 243–proline 276, aspartate 277–proline 311, asparagine 312–proline 346, and aspartate 347–lysine 377.

The protein belongs to the PPR family. P subfamily. In terms of assembly, component of the mitochondrial ribosome small subunit.

Its subcellular location is the mitochondrion. In Arabidopsis thaliana (Mouse-ear cress), this protein is Small ribosomal subunit protein mL103 (rPPR7).